The following is a 261-amino-acid chain: Thiazole synthase (261 aa).

Catalysis depends on Lys101, which acts as the Schiff-base intermediate with DXP. 1-deoxy-D-xylulose 5-phosphate contacts are provided by residues Gly162, 188–189, and 210–211; these read AG and NT.

The protein belongs to the ThiG family. Homotetramer. Forms heterodimers with either ThiH or ThiS.

The protein localises to the cytoplasm. It catalyses the reaction [ThiS sulfur-carrier protein]-C-terminal-Gly-aminoethanethioate + 2-iminoacetate + 1-deoxy-D-xylulose 5-phosphate = [ThiS sulfur-carrier protein]-C-terminal Gly-Gly + 2-[(2R,5Z)-2-carboxy-4-methylthiazol-5(2H)-ylidene]ethyl phosphate + 2 H2O + H(+). Its pathway is cofactor biosynthesis; thiamine diphosphate biosynthesis. Its function is as follows. Catalyzes the rearrangement of 1-deoxy-D-xylulose 5-phosphate (DXP) to produce the thiazole phosphate moiety of thiamine. Sulfur is provided by the thiocarboxylate moiety of the carrier protein ThiS. In vitro, sulfur can be provided by H(2)S. This Aromatoleum aromaticum (strain DSM 19018 / LMG 30748 / EbN1) (Azoarcus sp. (strain EbN1)) protein is Thiazole synthase.